The sequence spans 81 residues: Small ribosomal subunit protein bS16 (81 aa).

Belongs to the bacterial ribosomal protein bS16 family.

The polypeptide is Small ribosomal subunit protein bS16 (Coprothermobacter proteolyticus (strain ATCC 35245 / DSM 5265 / OCM 4 / BT)).